Consider the following 521-residue polypeptide: SET and MYND domain-containing protein DDB_G0292140 (521 aa).

A disordered region spans residues 1 to 101 (MDGVIESPSN…KIKKSKKSIK (101 aa)). The span at 12 to 55 (TIKISPSTSDSSTTTPIITTPPTQSTATVTTKAAATTTTTEAST) shows a compositional bias: low complexity. A compositionally biased stretch (pro residues) spans 56 to 65 (TPPPPQPTPT). Over residues 66–90 (PTQSTATVTKEVETTTETIPPIVTK) the composition is skewed to low complexity. The span at 91–101 (GKIKKSKKSIK) shows a compositional bias: basic residues. The 285-residue stretch at 122-406 (WPIHVYSHPI…EGDELTISYI (285 aa)) folds into the SET domain. Zn(2+) is bound by residues Cys167, Cys170, Cys188, Cys191, Cys197, Cys201, His209, and Cys213. Residues 167–213 (CQHCFLEVPLNQQILPTDFYMCEGCQRVGYCSANCRCIDYSQHRFEC) form an MYND-type zinc finger. Positions 442-521 (QTGTLEKDDD…QDHQNNDKSN (80 aa)) are disordered. Residues 448 to 469 (KDDDDNDDEKEKMDEDDDEKDD) show a composition bias toward acidic residues. Over residues 470-485 (DINNKNDKKSKYKSDG) the composition is skewed to basic and acidic residues. Over residues 486–495 (STDDEEDEDN) the composition is skewed to acidic residues. Over residues 497–514 (NNKNNNKNKNNNSNNQDH) the composition is skewed to low complexity.

It belongs to the class V-like SAM-binding methyltransferase superfamily.

In terms of biological role, probable methyltransferase. The chain is SET and MYND domain-containing protein DDB_G0292140 from Dictyostelium discoideum (Social amoeba).